We begin with the raw amino-acid sequence, 278 residues long: 3-methyl-2-oxobutanoate hydroxymethyltransferase (278 aa).

Mg(2+) is bound by residues D43 and D82. 3-methyl-2-oxobutanoate contacts are provided by residues D43–S44, D82, and K112. E114 is a binding site for Mg(2+). Residue E181 is the Proton acceptor of the active site.

It belongs to the PanB family. In terms of assembly, homodecamer; pentamer of dimers. Requires Mg(2+) as cofactor.

The protein localises to the cytoplasm. The enzyme catalyses 3-methyl-2-oxobutanoate + (6R)-5,10-methylene-5,6,7,8-tetrahydrofolate + H2O = 2-dehydropantoate + (6S)-5,6,7,8-tetrahydrofolate. The protein operates within cofactor biosynthesis; (R)-pantothenate biosynthesis; (R)-pantoate from 3-methyl-2-oxobutanoate: step 1/2. Catalyzes the reversible reaction in which hydroxymethyl group from 5,10-methylenetetrahydrofolate is transferred onto alpha-ketoisovalerate to form ketopantoate. The chain is 3-methyl-2-oxobutanoate hydroxymethyltransferase from Desulfitobacterium hafniense (strain Y51).